A 428-amino-acid polypeptide reads, in one-letter code: Adenylosuccinate synthetase (428 aa).

Residues 11 to 17 and 39 to 41 contribute to the GTP site; these read GDEGKGK and GHT. D12 (proton acceptor) is an active-site residue. Mg(2+) is bound by residues D12 and G39. IMP contacts are provided by residues 12-15, 37-40, T130, R144, N226, T241, and R305; these read DEGK and NAGH. H40 serves as the catalytic Proton donor. 301-307 is a substrate binding site; it reads VTTGRKR. GTP is bound by residues R307, 333–335, and 415–417; these read KLD and GTG.

Belongs to the adenylosuccinate synthetase family. In terms of assembly, homodimer. Mg(2+) serves as cofactor.

Its subcellular location is the cytoplasm. It carries out the reaction IMP + L-aspartate + GTP = N(6)-(1,2-dicarboxyethyl)-AMP + GDP + phosphate + 2 H(+). It participates in purine metabolism; AMP biosynthesis via de novo pathway; AMP from IMP: step 1/2. In terms of biological role, plays an important role in the de novo pathway and in the salvage pathway of purine nucleotide biosynthesis. Catalyzes the first committed step in the biosynthesis of AMP from IMP. The sequence is that of Adenylosuccinate synthetase from Komagataella phaffii (strain GS115 / ATCC 20864) (Yeast).